Here is a 552-residue protein sequence, read N- to C-terminus: Putative E3 ubiquitin-protein ligase ARI6 (552 aa).

The segment at 129 to 343 (REFTCGICFE…GGYYACNRYE (215 aa)) is TRIAD supradomain. Cys-133, Cys-136, Cys-150, His-152, Cys-155, Cys-158, Cys-178, Cys-183, Cys-222, Cys-227, Cys-245, Cys-247, Cys-252, Cys-255, His-260, Cys-265, Cys-292, and Cys-295 together coordinate Zn(2+). Residues 133 to 183 (CGICFESYPLEETISVSCGHPFCATCWTGYISTSINDGPGCLMLKCPYPCC) form an RING-type 1 zinc finger. The IBR-type zinc-finger motif lies at 202 to 265 (ERYYRYFLRS…SEEAHRPVDC (64 aa)). Residues 292 to 322 (CPKCKRPIEKNHGCMHMTCTPPCKFEFCWLC) form an RING-type 2; atypical zinc finger. The active site involves Cys-305. Zn(2+) contacts are provided by Cys-310, Cys-314, Cys-319, Cys-322, His-329, and Cys-339. The tract at residues 518 to 552 (HAASSKPANCKPSSNTKDGGKGKKEALTMAGSAET) is disordered. A compositionally biased stretch (polar residues) spans 519–534 (AASSKPANCKPSSNTK).

The protein belongs to the RBR family. Ariadne subfamily. It depends on Zn(2+) as a cofactor.

The enzyme catalyses [E2 ubiquitin-conjugating enzyme]-S-ubiquitinyl-L-cysteine + [acceptor protein]-L-lysine = [E2 ubiquitin-conjugating enzyme]-L-cysteine + [acceptor protein]-N(6)-ubiquitinyl-L-lysine.. It functions in the pathway protein modification; protein ubiquitination. Its function is as follows. Might act as an E3 ubiquitin-protein ligase, or as part of E3 complex, which accepts ubiquitin from specific E2 ubiquitin-conjugating enzymes and then transfers it to substrates. The protein is Putative E3 ubiquitin-protein ligase ARI6 (ARI6) of Arabidopsis thaliana (Mouse-ear cress).